Here is a 367-residue protein sequence, read N- to C-terminus: MGTVLSLSPASSAKGRRPGGLPEEKKKAPPAGDEALGGYGAPPVGKGGKGESRLKRPSVLISALTWKRLVAASAKKKKGSKKVTPKPASTGPDPLVQQRNRENLLRKGRDPPDGGGTAKPLAVPVPTVPAAAATCEPPSGGSAAAQPPGSGGGKPPPPPPPAPQVAPPVPGGSPRRVIVQASTGELLRCLGDFVCRRCYRLKELSPGELVGWFRGVDRSLLLQGWQDQAFITPANLVFVYLLCRESLRGDELASAAELQAAFLTCLYLAYSYMGNEISYPLKPFLVEPDKERFWQRCLRLIQRLSPQMLRLNADPHFFTQVFQDLKNEGEAAASGGGPPSGGAPAASSAARDSCAAGTKHWTMNLDR.

The span at 1-11 shows a compositional bias: polar residues; that stretch reads MGTVLSLSPAS. Disordered stretches follow at residues 1–56, 72–98, 131–175, and 329–367; these read MGTV…RLKR, ASAKKKKGSKKVTPKPASTGPDPLVQQ, AAAT…GSPR, and GEAAASGGGPPSGGAPAASSAARDSCAAGTKHWTMNLDR. Gly2 carries N-myristoyl glycine lipidation. Residues 74 to 84 show a composition bias toward basic residues; that stretch reads AKKKKGSKKVT. At Thr84 the chain carries Phosphothreonine. Residues 131–148 show a composition bias toward low complexity; the sequence is AAATCEPPSGGSAAAQPP. Pro residues predominate over residues 154–171; that stretch reads KPPPPPPPAPQVAPPVPG. Low complexity predominate over residues 342–357; that stretch reads GAPAASSAARDSCAAG.

The protein belongs to the cyclin-dependent kinase 5 activator family. Heterodimer of a catalytic subunit and a regulatory subunit. Myristoylated. The Gly-2-Ala mutant is absent of the cell periphery, suggesting that a proper myristoylation signal is essential for the proper distribution of CDK5R2 (p39). Brain and neuron specific.

The protein resides in the cell membrane. Its function is as follows. Activator of CDK5/TPKII. This chain is Cyclin-dependent kinase 5 activator 2 (CDK5R2), found in Homo sapiens (Human).